A 231-amino-acid chain; its full sequence is Ribose-5-phosphate isomerase A (231 aa).

Residues 32 to 35 (TGST), 85 to 88 (DGAD), and 98 to 101 (KGGG) each bind substrate. Residue E107 is the Proton acceptor of the active site. K125 is a binding site for substrate.

This sequence belongs to the ribose 5-phosphate isomerase family. As to quaternary structure, homodimer.

The enzyme catalyses aldehydo-D-ribose 5-phosphate = D-ribulose 5-phosphate. Its pathway is carbohydrate degradation; pentose phosphate pathway; D-ribose 5-phosphate from D-ribulose 5-phosphate (non-oxidative stage): step 1/1. Its function is as follows. Catalyzes the reversible conversion of ribose-5-phosphate to ribulose 5-phosphate. This chain is Ribose-5-phosphate isomerase A, found in Burkholderia cenocepacia (strain ATCC BAA-245 / DSM 16553 / LMG 16656 / NCTC 13227 / J2315 / CF5610) (Burkholderia cepacia (strain J2315)).